Consider the following 321-residue polypeptide: MRKTVLYLSAASLFLSSYTLKNDKEYSLAEEHIKNLPEAPEGYKWVVNEDYTDEFNGKRLNAAKWHAKSPYWTNGRPPATFKAENVSVKKGCLRIINTVLSPTEGLDGKPGDKYRLAGGAVASVKNQAHYGYYETRMKASLTTMSSTFWLSNRPVMKEIMKGGKKIKTWSSQELDIIETMGIIRSVNPDNPWNKTWNMQMNSNTHYWYQEQGGKRTDNTAKRSDVVSYMTDPSAEDFHTYGCWWVDANTVKFYYDGKYMYTIKPTTKYTDTPFDRPMFIHIVTETYDWEKQVPTAEDLKDKDKSTTYYDWVRAYKLVPIEE.

The signal sequence occupies residues 1–20 (MRKTVLYLSAASLFLSSYTL). The GH16 domain maps to 31–319 (EHIKNLPEAP…WVRAYKLVPI (289 aa)). The substrate site is built by W72, R76, E173, E178, and E284. E173 functions as the Nucleophile in the catalytic mechanism. E178 (proton donor) is an active-site residue.

It belongs to the glycosyl hydrolase 16 family.

It catalyses the reaction Hydrolysis of beta-D-galactopyranose-(1-&gt;4)-alpha-L-galactopyranose-6-sulfate linkages in porphyran.. Cleaves the sulfated polysaccharide porphyran at the (1-&gt;4) linkages between beta-D-galactopyranose and alpha-L-galactopyranose-6-sulfate, forming mostly the disaccharide alpha-L-galactopyranose-6-sulfate-(1-&gt;3)-beta-D-galactose. Some longer oligosaccharides of even number of residues are also observed. Inactive on the non-sulfated agarose portion of the porphyran backbone. The polypeptide is Beta-porphyranase B (Phocaeicola plebeius (strain DSM 17135 / JCM 12973 / CCUG 54634 / M2) (Bacteroides plebeius)).